A 193-amino-acid polypeptide reads, in one-letter code: Ribonuclease HII (193 aa).

Positions 15–193 constitute an RNase H type-2 domain; that stretch reads YIVAGVDEAG…SYHRRSFKSC (179 aa). A divalent metal cation is bound by residues D21, E22, and D112.

The protein belongs to the RNase HII family. Mn(2+) serves as cofactor. The cofactor is Mg(2+).

It is found in the cytoplasm. The catalysed reaction is Endonucleolytic cleavage to 5'-phosphomonoester.. Its function is as follows. Endonuclease that specifically degrades the RNA of RNA-DNA hybrids. This Rickettsia prowazekii (strain Madrid E) protein is Ribonuclease HII (rnhB).